We begin with the raw amino-acid sequence, 288 residues long: ATP synthase gamma chain (288 aa).

This sequence belongs to the ATPase gamma chain family. In terms of assembly, F-type ATPases have 2 components, CF(1) - the catalytic core - and CF(0) - the membrane proton channel. CF(1) has five subunits: alpha(3), beta(3), gamma(1), delta(1), epsilon(1). CF(0) has three main subunits: a, b and c.

The protein resides in the cell inner membrane. Functionally, produces ATP from ADP in the presence of a proton gradient across the membrane. The gamma chain is believed to be important in regulating ATPase activity and the flow of protons through the CF(0) complex. This chain is ATP synthase gamma chain, found in Rickettsia typhi (strain ATCC VR-144 / Wilmington).